The sequence spans 471 residues: Glutamate--tRNA ligase (471 aa).

Positions 9 to 19 match the 'HIGH' region motif; sequence PSPTGYLHVGG. Positions 98, 100, 125, and 127 each coordinate Zn(2+). Residues 237-241 carry the 'KMSKS' region motif; the sequence is KLSKR. Lys-240 serves as a coordination point for ATP.

It belongs to the class-I aminoacyl-tRNA synthetase family. Glutamate--tRNA ligase type 1 subfamily. As to quaternary structure, monomer. Requires Zn(2+) as cofactor.

The protein localises to the cytoplasm. It carries out the reaction tRNA(Glu) + L-glutamate + ATP = L-glutamyl-tRNA(Glu) + AMP + diphosphate. Its function is as follows. Catalyzes the attachment of glutamate to tRNA(Glu) in a two-step reaction: glutamate is first activated by ATP to form Glu-AMP and then transferred to the acceptor end of tRNA(Glu). In Yersinia pseudotuberculosis serotype IB (strain PB1/+), this protein is Glutamate--tRNA ligase.